Reading from the N-terminus, the 174-residue chain is Cytochrome c-550-like protein (174 aa).

A signal peptide spans 1 to 37 (MPGQTQGAKRWRVPGRGWRWAGILLLVWLGLASPAAG). The heme c site is built by Cys-82, Cys-85, His-86, and Cys-136.

The protein belongs to the cytochrome c family. PsbV subfamily. Heme c is required as a cofactor.

It localises to the cellular thylakoid membrane. Possible low-potential cytochrome c. In Synechococcus sp. (strain JA-3-3Ab) (Cyanobacteria bacterium Yellowstone A-Prime), this protein is Cytochrome c-550-like protein (psbV2).